Here is an 82-residue protein sequence, read N- to C-terminus: Large ribosomal subunit protein bL27 (82 aa).

Residues 1–21 form a disordered region; sequence MAHKKGASSSRNGRDSNAKRL.

This sequence belongs to the bacterial ribosomal protein bL27 family.

This Tropheryma whipplei (strain TW08/27) (Whipple's bacillus) protein is Large ribosomal subunit protein bL27.